Consider the following 69-residue polypeptide: MAAARNLRTALIFGGFISMVGAAFYPIYFRPLLRLEEYQKEQAVNRAGIVQEDVQPPGLKVWSDPFGRK.

The Mitochondrial matrix portion of the chain corresponds to 1-8; sequence MAAARNLR. The chain crosses the membrane as a helical span at residues 9–29; it reads TALIFGGFISMVGAAFYPIYF. The Mitochondrial intermembrane segment spans residues 30–69; it reads RPLLRLEEYQKEQAVNRAGIVQEDVQPPGLKVWSDPFGRK. F66 carries the post-translational modification Phenylalanine amide.

In terms of assembly, component of the MITRAC (mitochondrial translation regulation assembly intermediate of cytochrome c oxidase complex) complex, the core components of this complex being Coa3/Mitrac12 and Cox14. Interacts with Coa3/Mitrac12 and Cox4i1. Directly interacts with newly synthesized Mt-Co1/Cox1. As to expression, highly expressed in the hypothalamus, substantia nigra reticulata, Edinger-Westphal nucleus, and nucleus of the solitary tract/dorsal motor nucleus of the vagus, the spinal cord, and sensory ganglia (at protein level). Also expressed in the heart, thymus, esophagus, stomach, spleen, lung, pituitary gland, kidney, jejunum, duodenum, ileum, cerebrum, pons, and colon (at protein level). Expressed in preadipocytes and apidocytes (at protein level). Expressed in pancreatic islet cells (at protein level).

The protein resides in the mitochondrion inner membrane. It localises to the secreted. Functionally, component of the MITRAC (mitochondrial translation regulation assembly intermediate of cytochrome c oxidase complex) complex, that regulates cytochrome c oxidase assembly. Promotes the progression of complex assembly after the association of Mt-Co1/Cox11 with Cox4I1 and Cox6c. Chaperone-like assembly factor required to stabilize newly synthesized Mt-Co1/Cox1 and to prevent its premature turnover. Peptide involved in a broad spectrum of regulatory functions. Is a ligand for GPR173. As part of the reproductive cycle, it regulates gonadotropin-releasing hormone (GnRH) signaling in the hypothalamus and pituitary gland which augments the release of luteinizing hormone. More specifically, it regulates the expression of transcription factors CEBPB and POU2F1/OCT1 through the cAMP-PKA signaling pathway, which subsequently regulate the expression of GNRHR and KISS1. Plays a protective role in memory retention through activation of GNRHR. Regulates the secretion of AVP by hypothalamic neurons. Plays a role in the transduction of the itch sensation. Induces anxiolytic effects, reducing behavior associated with anxiety. Regulates food intake as well as satiation and satiety by increasing NUCB2 expression in neurons. In the ovary, it regulates follicular growth by stimulating granulosa cell proliferation by increasing the expression of GPR173, CREB1, CYP19A1, KITLG, FSHR, and LHCGR. It also increases the production of estradiol (E2). In the heart, it regulates contractility and relaxation by activating the AKT1-NOS3 and MAPK1-MAPK3 signaling pathways. It also plays a cardioprotective role during ischemia, where it activates the SAFE and RISK pathways. Stimulates the proliferation and differentiation of preadipocytes. In pancreatic islet cells, it induces proliferation of islet cells as well as the production of INS1 and INS2 through activation of the MAPK1-MAPK3 signaling pathways. This chain is Small integral membrane protein 20, found in Rattus norvegicus (Rat).